We begin with the raw amino-acid sequence, 685 residues long: UvrABC system protein B (685 aa).

The region spanning 30-188 is the Helicase ATP-binding domain; the sequence is DGVLRGDRWQ…QELVSLHYIR (159 aa). Residue 43–50 participates in ATP binding; it reads GVTGSGKT. The Beta-hairpin signature appears at 96-119; it reads YYDFYQPEAYLPALDKYIAKDLRI. The Helicase C-terminal domain occupies 435–597; it reads QIDDLLAEIR…ITPRSIRKSL (163 aa). The 36-residue stretch at 641-676 folds into the UVR domain; it reads YAMVAELRLEMNEAAIQMEYEKAAYLRDEIARLMHG.

The protein belongs to the UvrB family. As to quaternary structure, forms a heterotetramer with UvrA during the search for lesions. Interacts with UvrC in an incision complex.

Its subcellular location is the cytoplasm. Functionally, the UvrABC repair system catalyzes the recognition and processing of DNA lesions. A damage recognition complex composed of 2 UvrA and 2 UvrB subunits scans DNA for abnormalities. Upon binding of the UvrA(2)B(2) complex to a putative damaged site, the DNA wraps around one UvrB monomer. DNA wrap is dependent on ATP binding by UvrB and probably causes local melting of the DNA helix, facilitating insertion of UvrB beta-hairpin between the DNA strands. Then UvrB probes one DNA strand for the presence of a lesion. If a lesion is found the UvrA subunits dissociate and the UvrB-DNA preincision complex is formed. This complex is subsequently bound by UvrC and the second UvrB is released. If no lesion is found, the DNA wraps around the other UvrB subunit that will check the other stand for damage. This is UvrABC system protein B from Chlorobium phaeobacteroides (strain DSM 266 / SMG 266 / 2430).